Consider the following 562-residue polypeptide: Putative transport protein Spro_1639 (562 aa).

5 helical membrane-spanning segments follow: residues 8–28, 37–57, 66–86, 94–114, and 158–178; these read LLNGNYILLLFVVLALGLCLG, LGNSIGVLVVSLLLGQQHFAI, FMLFIFCVGVEAGPNFFSIFF, MLALVMVGSAMVIAIGLGKLF, and HLSLGYALTYLIGLVSLIFGA. 2 RCK C-terminal domains span residues 202–288 and 290–373; these read LDTD…SFRN and KEVF…KIGF. A run of 5 helical transmembrane segments spans residues 383 to 403, 406 to 426, 447 to 467, 475 to 495, and 541 to 561; these read LLAFCAFFIIGLLIGQITIQF, FSFGIGNAAGLLMAGIMLGFL, FGLMVFMAGVGLSAGAGIGNS, MLIAGLIVSLVPVVICFLFGA, and IANVLLTLAGSLIVVLWPGIL.

The protein belongs to the AAE transporter (TC 2.A.81) family. YbjL subfamily.

It is found in the cell membrane. This is Putative transport protein Spro_1639 from Serratia proteamaculans (strain 568).